Reading from the N-terminus, the 609-residue chain is Zinc metalloproteinase/disintegrin-like HR1a (609 aa).

An N-terminal signal peptide occupies residues 1-20; it reads MIQVLLVTICLAVFPYQGSS. Residues 21 to 190 constitute a propeptide that is removed on maturation; sequence IILGSGNVND…KKASKLVVTA (170 aa). The Peptidase M12B domain maps to 200-396; the sequence is RFIELVIVAD…DEPQCILNEP (197 aa). 2 residues coordinate Ca(2+): E203 and D287. N298 carries N-linked (GlcNAc...) asparagine glycosylation. Disulfide bonds link C311-C391, C351-C375, and C353-C358. H336 contacts Zn(2+). The active site involves E337. Residues H340 and H346 each coordinate Zn(2+). An N-linked (GlcNAc...) asparagine glycan is attached at N350. N374 carries N-linked (GlcNAc...) asparagine glycosylation. Residues C391 and N394 each coordinate Ca(2+). Residues 397–400 constitute a propeptide that is removed on maturation; sequence LRTD. In terms of domain architecture, Disintegrin spans 404–490; the sequence is PPVCGNELLE…DCPTDRFHRN (87 aa). Ca(2+) is bound by residues V406, N409, L411, E413, E416, and D419. Intrachain disulfides connect C407–C426, C407–C436, C418–C431, C418–C436, C420–C426, C430–C453, C444–C450, C449–C475, C462–C482, C469–C494, C469–C501, C494–C506, C501–C506, C513–C528, C513–C563, C528–C571, C541–C551, C551–C558, C558–C597, C563–C571, C591–C602, and C597–C602. The D/ECD-tripeptide motif lies at 468 to 470; that stretch reads ECD. Residues D470, E473, and D485 each coordinate Ca(2+). N-linked (GlcNAc...) asparagine glycosylation is present at N520.

The protein belongs to the venom metalloproteinase (M12B) family. P-III subfamily. P-IIIb sub-subfamily. As to quaternary structure, monomer. It depends on Zn(2+) as a cofactor. As to expression, expressed by the venom gland.

It is found in the secreted. Zinc protease that induces hemorrhage and has proteolytic activity. Has preference for Ala, His, Pro, Met, and Tyr at the P1 position, in descending order (in vitro). Predominantly prefers Val and Asp at the P3 and P2 positions, respectively. Its function is as follows. Inhibits platelet aggregation induced by ADP, thrombin, platelet-activating factor and collagen. Acts by inhibiting fibrinogen interaction with platelet receptors alpha-IIb/beta-3 (ITGA2B/ITGB3). The chain is Zinc metalloproteinase/disintegrin-like HR1a from Protobothrops flavoviridis (Habu).